The primary structure comprises 838 residues: Polyribonucleotide nucleotidyltransferase (838 aa).

Mg(2+)-binding residues include D494 and D500. Residues 561–620 enclose the KH domain; it reads PRMESMLIDKGKIKNVIGAGGKNVREICEKTGAKIEISQDGTVMIYAVGREAIESAKDMI. An S1 motif domain is found at 630–697; the sequence is GKIYSGEVCE…DKDHIQLSMR (68 aa). Over residues 747–757 the composition is skewed to gly residues; sequence GGASAGRNGRG. The interval 747–838 is disordered; it reads GGASAGRNGR…PAAPKKPRFF (92 aa). A compositionally biased stretch (low complexity) spans 788–810; that stretch reads AGSSGYSSDSSSGNTKSSSSESS. The segment covering 811-820 has biased composition (gly residues); the sequence is GGTGGRGRNG.

It belongs to the polyribonucleotide nucleotidyltransferase family. Requires Mg(2+) as cofactor.

The protein resides in the cytoplasm. The catalysed reaction is RNA(n+1) + phosphate = RNA(n) + a ribonucleoside 5'-diphosphate. In terms of biological role, involved in mRNA degradation. Catalyzes the phosphorolysis of single-stranded polyribonucleotides processively in the 3'- to 5'-direction. This is Polyribonucleotide nucleotidyltransferase from Anaplasma phagocytophilum (strain HZ).